Reading from the N-terminus, the 434-residue chain is 4-hydroxy-3-methylbut-2-en-1-yl diphosphate synthase (flavodoxin) (434 aa).

Over residues 1–15 (MQSEAQSPRSSQICS) the composition is skewed to polar residues. The segment at 1 to 20 (MQSEAQSPRSSQICSTEPVF) is disordered. [4Fe-4S] cluster contacts are provided by Cys322, Cys325, Cys368, and Glu375.

It belongs to the IspG family. [4Fe-4S] cluster serves as cofactor.

It catalyses the reaction (2E)-4-hydroxy-3-methylbut-2-enyl diphosphate + oxidized [flavodoxin] + H2O + 2 H(+) = 2-C-methyl-D-erythritol 2,4-cyclic diphosphate + reduced [flavodoxin]. Its pathway is isoprenoid biosynthesis; isopentenyl diphosphate biosynthesis via DXP pathway; isopentenyl diphosphate from 1-deoxy-D-xylulose 5-phosphate: step 5/6. Converts 2C-methyl-D-erythritol 2,4-cyclodiphosphate (ME-2,4cPP) into 1-hydroxy-2-methyl-2-(E)-butenyl 4-diphosphate. The sequence is that of 4-hydroxy-3-methylbut-2-en-1-yl diphosphate synthase (flavodoxin) from Burkholderia mallei (strain ATCC 23344).